The following is a 501-amino-acid chain: Probable histidine--tRNA ligase, mitochondrial (501 aa).

The segment at 32–54 is disordered; the sequence is TNSNNNNNNNNNNNNNNNNNKNI. The span at 33-54 shows a compositional bias: low complexity; that stretch reads NSNNNNNNNNNNNNNNNNNKNI.

This sequence belongs to the class-II aminoacyl-tRNA synthetase family.

The protein resides in the mitochondrion matrix. The catalysed reaction is tRNA(His) + L-histidine + ATP = L-histidyl-tRNA(His) + AMP + diphosphate + H(+). The chain is Probable histidine--tRNA ligase, mitochondrial (mhisS) from Dictyostelium discoideum (Social amoeba).